Reading from the N-terminus, the 78-residue chain is Delta-conotoxin-like Ai6.1 (78 aa).

A signal peptide spans methionine 1–alanine 22. Residues aspartate 23 to asparagine 49 constitute a propeptide that is removed on maturation. Intrachain disulfides connect cysteine 53-cysteine 68, cysteine 60-cysteine 72, and cysteine 67-cysteine 77.

Belongs to the conotoxin O1 superfamily. Expressed by the venom duct.

The protein resides in the secreted. Functionally, delta-conotoxins bind to site 6 of voltage-gated sodium channels (Nav) and inhibit the inactivation process. The chain is Delta-conotoxin-like Ai6.1 from Conus ammiralis (Admiral cone).